A 544-amino-acid polypeptide reads, in one-letter code: Methionine--tRNA ligase (544 aa).

A 'HIGH' region motif is present at residues 10-20 (PYANGSLHLGH). Zn(2+) is bound by residues Cys141, Cys144, Cys153, and Cys156. Positions 329 to 333 (KLSTS) match the 'KMSKS' region motif. Position 332 (Thr332) interacts with ATP.

This sequence belongs to the class-I aminoacyl-tRNA synthetase family. MetG type 1 subfamily. As to quaternary structure, monomer. Zn(2+) serves as cofactor.

It is found in the cytoplasm. It catalyses the reaction tRNA(Met) + L-methionine + ATP = L-methionyl-tRNA(Met) + AMP + diphosphate. Its function is as follows. Is required not only for elongation of protein synthesis but also for the initiation of all mRNA translation through initiator tRNA(fMet) aminoacylation. This is Methionine--tRNA ligase from Bacillus cereus (strain AH187).